A 549-amino-acid polypeptide reads, in one-letter code: CTP synthase (549 aa).

The interval methionine 1 to leucine 267 is amidoligase domain. Residue serine 13 participates in CTP binding. Serine 13 provides a ligand contact to UTP. Residues serine 14–isoleucine 19 and aspartate 71 contribute to the ATP site. Aspartate 71 and glutamate 141 together coordinate Mg(2+). CTP contacts are provided by residues aspartate 148 to glutamate 150, lysine 188 to glutamine 193, and lysine 224. Residues lysine 188 to glutamine 193 and lysine 224 each bind UTP. The 243-residue stretch at lysine 292–aspartate 534 folds into the Glutamine amidotransferase type-1 domain. Residue glycine 354 participates in L-glutamine binding. Residue cysteine 381 is the Nucleophile; for glutamine hydrolysis of the active site. Residues leucine 382–glutamine 385, glutamate 405, and arginine 462 each bind L-glutamine. Active-site residues include histidine 507 and glutamate 509.

The protein belongs to the CTP synthase family. In terms of assembly, homotetramer.

The catalysed reaction is UTP + L-glutamine + ATP + H2O = CTP + L-glutamate + ADP + phosphate + 2 H(+). It catalyses the reaction L-glutamine + H2O = L-glutamate + NH4(+). It carries out the reaction UTP + NH4(+) + ATP = CTP + ADP + phosphate + 2 H(+). It participates in pyrimidine metabolism; CTP biosynthesis via de novo pathway; CTP from UDP: step 2/2. Allosterically activated by GTP, when glutamine is the substrate; GTP has no effect on the reaction when ammonia is the substrate. The allosteric effector GTP functions by stabilizing the protein conformation that binds the tetrahedral intermediate(s) formed during glutamine hydrolysis. Inhibited by the product CTP, via allosteric rather than competitive inhibition. Catalyzes the ATP-dependent amination of UTP to CTP with either L-glutamine or ammonia as the source of nitrogen. Regulates intracellular CTP levels through interactions with the four ribonucleotide triphosphates. The protein is CTP synthase of Synechococcus sp. (strain CC9902).